We begin with the raw amino-acid sequence, 369 residues long: Phenylalanine--tRNA ligase alpha subunit (369 aa).

Glutamate 272 contacts Mg(2+).

The protein belongs to the class-II aminoacyl-tRNA synthetase family. Phe-tRNA synthetase alpha subunit type 1 subfamily. As to quaternary structure, tetramer of two alpha and two beta subunits. Mg(2+) is required as a cofactor.

The protein localises to the cytoplasm. It carries out the reaction tRNA(Phe) + L-phenylalanine + ATP = L-phenylalanyl-tRNA(Phe) + AMP + diphosphate + H(+). The chain is Phenylalanine--tRNA ligase alpha subunit from Cutibacterium acnes (strain DSM 16379 / KPA171202) (Propionibacterium acnes).